We begin with the raw amino-acid sequence, 259 residues long: GTP cyclohydrolase FolE2 (259 aa).

This sequence belongs to the GTP cyclohydrolase IV family.

The catalysed reaction is GTP + H2O = 7,8-dihydroneopterin 3'-triphosphate + formate + H(+). Its pathway is cofactor biosynthesis; 7,8-dihydroneopterin triphosphate biosynthesis; 7,8-dihydroneopterin triphosphate from GTP: step 1/1. Its function is as follows. Converts GTP to 7,8-dihydroneopterin triphosphate. This Thermosipho melanesiensis (strain DSM 12029 / CIP 104789 / BI429) protein is GTP cyclohydrolase FolE2.